Reading from the N-terminus, the 198-residue chain is Fe/S biogenesis protein NfuA (198 aa).

The [4Fe-4S] cluster site is built by C155 and C158.

It belongs to the NfuA family. As to quaternary structure, homodimer. [4Fe-4S] cluster is required as a cofactor.

Functionally, involved in iron-sulfur cluster biogenesis. Binds a 4Fe-4S cluster, can transfer this cluster to apoproteins, and thereby intervenes in the maturation of Fe/S proteins. Could also act as a scaffold/chaperone for damaged Fe/S proteins. This is Fe/S biogenesis protein NfuA from Haemophilus influenzae (strain 86-028NP).